A 381-amino-acid polypeptide reads, in one-letter code: Queuine tRNA-ribosyltransferase (381 aa).

Aspartate 92 serves as the catalytic Proton acceptor. Substrate is bound by residues 92–96 (DSGGF), aspartate 146, glutamine 190, and glycine 217. Residues 248–254 (GVGRPED) form an RNA binding region. Aspartate 267 serves as the catalytic Nucleophile. Residues 272–276 (TRNAR) are RNA binding; important for wobble base 34 recognition. Cysteine 305, cysteine 307, cysteine 310, and histidine 337 together coordinate Zn(2+).

It belongs to the queuine tRNA-ribosyltransferase family. In terms of assembly, homodimer. Within each dimer, one monomer is responsible for RNA recognition and catalysis, while the other monomer binds to the replacement base PreQ1. Zn(2+) is required as a cofactor.

The enzyme catalyses 7-aminomethyl-7-carbaguanine + guanosine(34) in tRNA = 7-aminomethyl-7-carbaguanosine(34) in tRNA + guanine. It participates in tRNA modification; tRNA-queuosine biosynthesis. In terms of biological role, catalyzes the base-exchange of a guanine (G) residue with the queuine precursor 7-aminomethyl-7-deazaguanine (PreQ1) at position 34 (anticodon wobble position) in tRNAs with GU(N) anticodons (tRNA-Asp, -Asn, -His and -Tyr). Catalysis occurs through a double-displacement mechanism. The nucleophile active site attacks the C1' of nucleotide 34 to detach the guanine base from the RNA, forming a covalent enzyme-RNA intermediate. The proton acceptor active site deprotonates the incoming PreQ1, allowing a nucleophilic attack on the C1' of the ribose to form the product. After dissociation, two additional enzymatic reactions on the tRNA convert PreQ1 to queuine (Q), resulting in the hypermodified nucleoside queuosine (7-(((4,5-cis-dihydroxy-2-cyclopenten-1-yl)amino)methyl)-7-deazaguanosine). This Xanthomonas campestris pv. campestris (strain 8004) protein is Queuine tRNA-ribosyltransferase.